The sequence spans 325 residues: GMP reductase (325 aa).

The active-site Thioimidate intermediate is Cys174. Residue 203–226 (LIADGGIRTHGDIAKSIRFGASMV) participates in NADP(+) binding.

The protein belongs to the IMPDH/GMPR family. GuaC type 2 subfamily.

The enzyme catalyses IMP + NH4(+) + NADP(+) = GMP + NADPH + 2 H(+). Functionally, catalyzes the irreversible NADPH-dependent deamination of GMP to IMP. It functions in the conversion of nucleobase, nucleoside and nucleotide derivatives of G to A nucleotides, and in maintaining the intracellular balance of A and G nucleotides. This chain is GMP reductase, found in Staphylococcus aureus (strain NCTC 8325 / PS 47).